Reading from the N-terminus, the 514-residue chain is MNPDLDTGHNTSAPAHWGELKDANFTGPNQTSSNSTLPQLDVTRAISVGCLGAFILFAIVGNILVILSVACNRHLRTPTNYFIVNLAIADLLLSFTDLPFSATLEVLGYWVLGRIFCDIWAAVDVLCCTASILSLCAISIDRYIGVRYSLQYPTLVTRRKAILALLSVWVLSTVISIGPLLGWKEPAPNDDKECGVTEEPFYALFSSLGSFYIPLAVILVMYCRVYIVAKRTTKNLEAGVMKEMSNSKELTLRIHSKNFHEDTLSSTKAKGHNPRSSIAVKLFKFSREKKAAKTLGIVVGMFILCWLPFFIALPLGSLFSTLKPPDAVFKVVFWLGYFNSCLNPIIYPCSSKEFKRAFMRILGCQCRGGRRRRRRRRLGACAYTYRPWTRGGSLERSQSRKDSLDDSGSCMSGSQRTLPSASPSPGYLGRGTQPPVELCAFPEWKPGALLSLPEPPGRRGRLDSGPLFTFKLLGEPESPGTEGDASNGGCDTTTDLANGQPGFKSNMPLAPGHF.

Topologically, residues 1-45 (MNPDLDTGHNTSAPAHWGELKDANFTGPNQTSSNSTLPQLDVTRA) are extracellular. N-linked (GlcNAc...) asparagine glycans are attached at residues Asn-10, Asn-24, Asn-29, and Asn-34. A helical transmembrane segment spans residues 46–69 (ISVGCLGAFILFAIVGNILVILSV). Residues 70–82 (ACNRHLRTPTNYF) are Cytoplasmic-facing. A helical membrane pass occupies residues 83-104 (IVNLAIADLLLSFTDLPFSATL). Residues 105–114 (EVLGYWVLGR) are Extracellular-facing. A helical transmembrane segment spans residues 115 to 140 (IFCDIWAAVDVLCCTASILSLCAISI). The cysteines at positions 117 and 194 are disulfide-linked. The Cytoplasmic segment spans residues 141-160 (DRYIGVRYSLQYPTLVTRRK). A helical transmembrane segment spans residues 161 to 183 (AILALLSVWVLSTVISIGPLLGW). The Extracellular segment spans residues 184–200 (KEPAPNDDKECGVTEEP). The helical transmembrane segment at 201–223 (FYALFSSLGSFYIPLAVILVMYC) threads the bilayer. Residues 224–294 (RVYIVAKRTT…FSREKKAAKT (71 aa)) are Cytoplasmic-facing. Residue Thr-263 is modified to Phosphothreonine. A helical transmembrane segment spans residues 295–318 (LGIVVGMFILCWLPFFIALPLGSL). The Extracellular segment spans residues 319 to 325 (FSTLKPP). The chain crosses the membrane as a helical span at residues 326-350 (DAVFKVVFWLGYFNSCLNPIIYPCS). Over 351–514 (SKEFKRAFMR…SNMPLAPGHF (164 aa)) the chain is Cytoplasmic. Cys-364 carries the S-palmitoyl cysteine lipid modification. Positions 367–377 (RGGRRRRRRRR) match the Nuclear localization signal motif. Disordered stretches follow at residues 391 to 429 (GGSL…GYLG) and 473 to 514 (LGEP…PGHF). Positions 409 to 423 (SCMSGSQRTLPSASP) are enriched in polar residues.

The protein belongs to the G-protein coupled receptor 1 family. Adrenergic receptor subfamily. ADRA1B sub-subfamily. In terms of assembly, homo- and heterooligomer. Heterooligomerizes with ADRA1B homooligomers in cardiac myocytes. Interacts with CAVIN4.

It localises to the nucleus membrane. Its subcellular location is the cell membrane. The protein resides in the cytoplasm. It is found in the membrane. The protein localises to the caveola. Its function is as follows. This alpha-adrenergic receptor mediates its action by association with G proteins that activate a phosphatidylinositol-calcium second messenger system. Its effect is mediated by G(q) and G(11) proteins. Nuclear ADRA1A-ADRA1B heterooligomers regulate phenylephrine (PE)-stimulated ERK signaling in cardiac myocytes. The sequence is that of Alpha-1B adrenergic receptor (Adra1b) from Mus musculus (Mouse).